The sequence spans 1696 residues: MPPAIVILALFTAALCAVNLRTVAADGPRIYRNEWALHVEGGTAAADRLASKHGFINKGQIGSLEDHYLFVHRRTWKRSLRSSSHRHALLQREPEVRWLQQQVVKRRVKRRVKRVYSMYPWEQRVQHSSPQVNNPAQQDNLWDPHFNDEKWDKMWYLHCDRPEFACQWSDMNVEAAWKKGYTGKGVVVSILDDGSETDHPDLAGNYDPDASSDINGGTLDPTPRYEYTNENRHGTRCAGEVAAMGNNSFCSVGVAYKASIGGVRMLDGDVTDSVEAASLGLNPQHIMIYSASWGPDDDGKTVDGPANLAQKTFQAGAENGRDKLGSIFVWASGNGGRTHDSCGCDGYTNSIYTISVSSASEQGKVPWYLEPCASTLATTYSSGAPHERKVITTDLRKGCTESHTGTSASAPMAAGILALALEANPMLTWRDMQYIVVMAANPSPLDRDTESAYPRDPRKESDFVTNGAGLRVSHNFGFGLMDAGKMVELAESWRRVPEQHVCEEDPNAQQRAITKGETIVDTKTTGGCNGTDHHVKYLEHVVVEISLDHPCRGHLSIHITSPSGTRSTLLPERQFDSSSDGLKDWAFMTTHCWGEQPEGDWILEVKDLGQQNCQRYGLRTVLPVLRKWKLILYGTAEHPLYKRDEESRPHTPQTREEPTDEEECEDGDYYDRSKQRCRHCHDSCATCHGRHSGQCLSCHEGNYFVEDEGTCSEECGQGYYKDEEERKCLDCSADCLTCQVSADHCTSCDDEDGLKLFENTCVAQCSEGRYMDENDVCQDCDDSCDTCTGPDATDCVTCADEDLLQESQCVESCSSGYFQQEYECLKCHATCASCSGSRDDQCLTCSGHLELDEDTHRCITSCEDGEYGTEEGKCEDCNIICKKCNGSQADQCLECHHDTNLYDTTCVQYCGNRRYPENGECHPCHPSCLGCIGGEINQCNQCITDYEGEDHFLYQGTCHVTCPPGLYGDTTDQVCKACAPGCIACDGPADNQCTLCEEERAPTDGRCQSEGSQTDEAECAEGCHSCEEGPDICDSCDEDYYLTEDTCVRRTNCPSFTYPDDQDRECRPCHDNCEACDGPNNQNCNSCKEGFYKTPDGCSTGCPNRYYKDDTNKECKPCDSSCFTCSGPASFHCLSCADGDFLHESSCRSTCPAGFIGNAESHECVESSCEQDQYYSSETGRCEDCPYNCRACDNDGDCAECAPTYIVVDGRCRPEETCEDGEYQDRDRDTAELSCRPCHQSCKTCSGPSDTDCDSCKGDDTILDRGECITSCGPGEYMDRREKKCKACHPTCKECSDEYDDTCTACNDGFLLTDASSCEAGCPPGQFLHHGDCDSCHRECKTCDGPHHDNCLSCQPGSYLNDQQCSTHCPEGTFEETYEDDSGETVLQCRLCHVNCKTCHGEGEEDCMECANDIKYKQDGRCVTECQEGHYPDLTNECQQCWSDCETCDGPRNDQCVTCPYNYYLVLGKCLEDCPEGYYDTMRQEKECGECHPSCATCNEGGNYNCLSCPYGSKLGEGVCYPMCEEHEYYVEKTQICEECDNSCKTCRGSTAHDCLSCEAPYGYHAMKHLCTACCEEGSPENEYCCICHESTRLCITDREAEGVQFSSADSIPTNVAYIAVATFICVVIVVLFFVVFGMLQARSNGRLCWAHKYQQVPTTRYEKMNDHVNILSQEDFYNEDSLSEDEIHSIDSTRH.

Positions 1-25 are cleaved as a signal peptide; it reads MPPAIVILALFTAALCAVNLRTVAA. A propeptide spanning residues 26–110 is cleaved from the precursor; sequence DGPRIYRNEW…QQVVKRRVKR (85 aa). The segment at 111–488 is catalytic; sequence RVKRVYSMYP…GLMDAGKMVE (378 aa). Topologically, residues 111–1618 are extracellular; it reads RVKRVYSMYP…ADSIPTNVAY (1508 aa). The 321-residue stretch at 167-487 folds into the Peptidase S8 domain; the sequence is QWSDMNVEAA…FGLMDAGKMV (321 aa). Active-site charge relay system residues include Asp-192 and His-233. An N-linked (GlcNAc...) asparagine glycan is attached at Asn-246. The active-site Charge relay system is the Ser-407. Residues 495–638 enclose the P/Homo B domain; it reads RVPEQHVCEE…KLILYGTAEH (144 aa). Asn-529 is a glycosylation site (N-linked (GlcNAc...) asparagine). Basic and acidic residues predominate over residues 643-657; it reads RDEESRPHTPQTREE. The segment at 643 to 666 is disordered; that stretch reads RDEESRPHTPQTREEPTDEEECED. Residues 664 to 1649 are CRM (Cys-rich motif); the sequence is CEDGDYYDRS…LQARSNGRLC (986 aa). A glycan (N-linked (GlcNAc...) asparagine) is linked at Asn-885. The chain crosses the membrane as a helical span at residues 1619–1639; sequence IAVATFICVVIVVLFFVVFGM. Residues 1640–1696 are Cytoplasmic-facing; that stretch reads LQARSNGRLCWAHKYQQVPTTRYEKMNDHVNILSQEDFYNEDSLSEDEIHSIDSTRH.

It belongs to the peptidase S8 family.

The protein localises to the secreted. It is found in the cell membrane. Serine endoprotease that processes various proproteins by cleavage at paired basic amino acids, recognizing the RXXX[KR]R consensus motif. Likely functions in the constitutive and regulated secretory pathways. The protein is Proprotein convertase subtilisin/kexin type 5 (PC6) of Branchiostoma californiense (California lancelet).